A 78-amino-acid polypeptide reads, in one-letter code: Large ribosomal subunit protein bL28 (78 aa).

Residues 1–30 are disordered; sequence MAAHCQVTGAGPGFGHSISHSHRRTKRRFD.

The protein belongs to the bacterial ribosomal protein bL28 family.

This chain is Large ribosomal subunit protein bL28, found in Micrococcus luteus (strain ATCC 4698 / DSM 20030 / JCM 1464 / CCM 169 / CCUG 5858 / IAM 1056 / NBRC 3333 / NCIMB 9278 / NCTC 2665 / VKM Ac-2230) (Micrococcus lysodeikticus).